The chain runs to 732 residues: Myosin heavy chain kinase B (732 aa).

The Alpha-type protein kinase domain occupies 124–328; that stretch reads DPYTTTAQWT…ICQYLNLQSI (205 aa). 298–303 lines the ATP pocket; that stretch reads GIGNLG. The segment at 331-428 is disordered; sequence KSEKSDCGTV…TNKERSKSKS (98 aa). The segment covering 356-394 has biased composition (low complexity); it reads NNNNNNNNNNNNNNNNNNSNNNNNNNSSISKSLVEISSG. Residues 395–404 show a composition bias toward basic and acidic residues; sequence SKERNDRDSP. Residues 405–419 show a composition bias toward polar residues; sequence SRQLFVSNDGNTLNT. WD repeat units follow at residues 458–486, 500–528, 540–568, 580–608, 620–648, 660–688, and 700–730; these read KGYHVTSHLCICDNLLFTGCSDNSIRVYD, GHEGPVESICYNDQYLFSGSSDHSIKVWD, GHDKPVHTVLLNDKYLFSGSSDKTIKVWD, SHARAVKTLCISGQYLFSGSNDKTIKVWD, GHTKWVTTICILGTNLYSGSYDKTIRVWN, GHDRWVEHMVICDKLLFTASDDNTIKIWD, and GHNATVQCLAVWEDKKCVISCSHDQSIRVWG.

The protein belongs to the protein kinase superfamily. Alpha-type protein kinase family. ALPK subfamily.

The catalysed reaction is L-threonyl-[myosin heavy-chain] + ATP = O-phospho-L-threonyl-[myosin heavy-chain] + ADP + H(+). In terms of biological role, catalyzes its autophosphorylation, which is needed for enzymatic activity and phosphorylates myosin II heavy chain at a threonine in the C-terminal tail region. This phosphorylation is critical in regulating the assembly and disassembly of myosin II filament. Participates in control of myosin localization. This Dictyostelium discoideum (Social amoeba) protein is Myosin heavy chain kinase B (mhkB).